The sequence spans 150 residues: D-aminoacyl-tRNA deacylase (150 aa).

A Gly-cisPro motif, important for rejection of L-amino acids motif is present at residues 140 to 141 (GP).

This sequence belongs to the DTD family. Homodimer.

It is found in the cytoplasm. It catalyses the reaction glycyl-tRNA(Ala) + H2O = tRNA(Ala) + glycine + H(+). The catalysed reaction is a D-aminoacyl-tRNA + H2O = a tRNA + a D-alpha-amino acid + H(+). In terms of biological role, an aminoacyl-tRNA editing enzyme that deacylates mischarged D-aminoacyl-tRNAs. Also deacylates mischarged glycyl-tRNA(Ala), protecting cells against glycine mischarging by AlaRS. Acts via tRNA-based rather than protein-based catalysis; rejects L-amino acids rather than detecting D-amino acids in the active site. By recycling D-aminoacyl-tRNA to D-amino acids and free tRNA molecules, this enzyme counteracts the toxicity associated with the formation of D-aminoacyl-tRNA entities in vivo and helps enforce protein L-homochirality. The polypeptide is D-aminoacyl-tRNA deacylase (DTD1) (Kluyveromyces lactis (strain ATCC 8585 / CBS 2359 / DSM 70799 / NBRC 1267 / NRRL Y-1140 / WM37) (Yeast)).